The chain runs to 185 residues: Protein FAM219A (185 aa).

M1 carries the post-translational modification N-acetylmethionine. Positions M1–S131 are disordered. S47 is subject to Phosphoserine. The segment covering K52–R61 has biased composition (basic and acidic residues). Polar residues predominate over residues K66–K80. Phosphoserine is present on residues S72 and S102. T113 carries the phosphothreonine modification. A phosphoserine mark is found at S115 and S122. A compositionally biased stretch (low complexity) spans S122–S131.

Belongs to the FAM219 family.

This is Protein FAM219A (FAM219A) from Homo sapiens (Human).